Consider the following 350-residue polypeptide: Peroxidase 24 (350 aa).

A signal peptide spans 1-27; the sequence is MANKSLEIRFLFPLVLFLVVKLLCVDG. Cystine bridges form between C55–C135, C88–C93, C141–C346, and C221–C253. An N-linked (GlcNAc...) asparagine glycan is attached at N73. The active-site Proton acceptor is H86. D87, V90, G92, D94, and S96 together coordinate Ca(2+). Residue P184 participates in substrate binding. An N-linked (GlcNAc...) asparagine glycan is attached at N189. H214 provides a ligand contact to heme b. Ca(2+) is bound at residue T215. N-linked (GlcNAc...) asparagine glycosylation is present at N230. 2 residues coordinate Ca(2+): D269 and D277.

It belongs to the peroxidase family. Classical plant (class III) peroxidase subfamily. The cofactor is heme b. Ca(2+) is required as a cofactor.

It is found in the secreted. The enzyme catalyses 2 a phenolic donor + H2O2 = 2 a phenolic radical donor + 2 H2O. Functionally, removal of H(2)O(2), oxidation of toxic reductants, biosynthesis and degradation of lignin, suberization, auxin catabolism, response to environmental stresses such as wounding, pathogen attack and oxidative stress. These functions might be dependent on each isozyme/isoform in each plant tissue. The protein is Peroxidase 24 (PER24) of Arabidopsis thaliana (Mouse-ear cress).